Reading from the N-terminus, the 345-residue chain is C5a anaphylatoxin chemotactic receptor 1 (345 aa).

Residues 1–32 (MMVTVSYDYDYNSTFLPDGFVDNYVERLSFGD) lie on the Extracellular side of the membrane. Sulfotyrosine occurs at positions 9 and 11. N-linked (GlcNAc...) asparagine glycosylation is present at N12. A helical membrane pass occupies residues 33–59 (LVAVVIMVVVFLVGVPGNALVVWVTAC). Over 60 to 64 (EARRH) the chain is Cytoplasmic. The helical transmembrane segment at 65–88 (INAIWFLNLAAADLLSCLALPILL) threads the bilayer. Topologically, residues 89-105 (VSTVHLNHWYFGDTACK) are extracellular. A disulfide bond links C104 and C183. The helical transmembrane segment at 106–127 (VLPSLILLNMYTSILLLATISA) threads the bilayer. The Cytoplasmic segment spans residues 128–148 (DRLLLVLSPIWCQRFRGGCLA). Residues 149–169 (WTACGLAWVLALLLSSPSFLY) traverse the membrane as a helical segment. The Extracellular portion of the chain corresponds to 170–195 (RRTHNEHFSFKVYCVTDYGRDISKER). Residues 196-221 (AVALVRLLVGFIVPLITLTACYTFLL) form a helical membrane-spanning segment. At 222–237 (LRTWSRKATRSAKTVK) the chain is on the cytoplasmic side. A helical transmembrane segment spans residues 238–260 (VVVAVVSSFFVFWLPYQVTGILL). Topologically, residues 261-277 (AWHSPNSATYRNTKALD) are extracellular. Residues 278-298 (AVCVAFAYINCCINPIIYVVA) traverse the membrane as a helical segment. At 299-345 (GHGFQGRLLKSLPSVLRNVLTEESLDKRHQSFARSTVDTMPQKSESV) the chain is on the cytoplasmic side. Phosphoserine occurs at positions 309, 312, 322, 329, and 333.

This sequence belongs to the G-protein coupled receptor 1 family. As to quaternary structure, homodimer. May also form higher-order oligomers. Interacts (when phosphorylated) with ARRB1 and ARRB2; the interaction is associated with internalization of C5aR. Sulfation plays a critical role in the association of C5aR with C5a, but no significant role in the ability of the receptor to transduce a signal and mobilize calcium in response to a small peptide agonist. In terms of processing, phosphorylated on serine residues in response to C5a binding, resulting in internalization of the receptor and short-term desensitization to C5a. Expressed strongly in macrophages and spleen. Weak expression detected in lung, liver, brain, heart and kidney.

Its subcellular location is the cell membrane. It is found in the cytoplasmic vesicle. Functionally, receptor for the chemotactic and inflammatory peptide anaphylatoxin C5a. The ligand interacts with at least two sites on the receptor: a high-affinity site on the extracellular N-terminus, and a second site in the transmembrane region which activates downstream signaling events. Receptor activation stimulates chemotaxis, granule enzyme release, intracellular calcium release and superoxide anion production. The chain is C5a anaphylatoxin chemotactic receptor 1 (C5AR1) from Cavia porcellus (Guinea pig).